A 340-amino-acid polypeptide reads, in one-letter code: Pesticidal crystal protein Cry15Aa (340 aa).

The interval 318–340 is disordered; sequence RDYDKEHICHDQAEKYERDYDKE.

Its function is as follows. Promotes colloidosmotic lysis by binding to the midgut epithelial cells of lepidopteran larvae. The protein is Pesticidal crystal protein Cry15Aa (cry15Aa) of Bacillus thuringiensis subsp. thompsoni.